A 1230-amino-acid chain; its full sequence is SAM and SH3 domain-containing protein 1 (1230 aa).

A compositionally biased stretch (low complexity) spans Met-1–Pro-10. Positions Met-1–Val-30 are disordered. Phosphoserine occurs at positions 83 and 241. Disordered stretches follow at residues Arg-211 to Val-249 and Lys-275 to Trp-337. Residues Lys-275 to Ser-297 show a composition bias toward basic and acidic residues. Positions Ser-324–Thr-336 are enriched in low complexity. Position 400 is a phosphoserine (Ser-400). Disordered regions lie at residues Pro-439–Asp-566, Glu-610–Asp-633, and Val-705–Asp-792. A compositionally biased stretch (polar residues) spans Lys-461 to Asp-470. The segment covering Pro-485–Lys-494 has biased composition (basic and acidic residues). A compositionally biased stretch (low complexity) spans Gly-498–Gly-516. A compositionally biased stretch (polar residues) spans Gln-517–Arg-529. The 62-residue stretch at Pro-547–Glu-608 folds into the SH3 domain. Residues Arg-615–Arg-624 show a composition bias toward basic residues. The 65-residue stretch at Ser-626 to Tyr-690 folds into the SAM 1 domain. The segment covering Val-737–Asn-758 has biased composition (polar residues). Residues Gly-768–Leu-779 are compositionally biased toward basic and acidic residues. Phosphoserine occurs at positions 813 and 831. Disordered stretches follow at residues Glu-818–Gly-875 and Pro-915–Ala-1045. A required for interaction with TRAF6 region spans residues Asn-844 to Thr-852. Polar residues predominate over residues Thr-852–Thr-868. The span at Gly-940 to Val-956 shows a compositional bias: basic and acidic residues. The span at Ala-962 to Pro-972 shows a compositional bias: polar residues. The segment covering Ser-1008–Pro-1019 has biased composition (low complexity). The region spanning Gly-1160–Pro-1224 is the SAM 2 domain.

In terms of assembly, interacts with GNAS. Interacts with IQGAP1. Interacts with TRAF6 (via C-terminus); the interaction is LPS-dependent. Interacts with MAP3K7, CHUK and IKBKB. In terms of tissue distribution, expressed in the microvascular endothelium of various organs, as well as in parenchymal cells. Expressed in the endothelium but not lymphoid cells of spleen and thymus.

It localises to the cytoplasm. Functionally, is a positive regulator of NF-kappa-B signaling downstream of TLR4 activation. It acts as a scaffold molecule to assemble a molecular complex that includes TRAF6, MAP3K7, CHUK and IKBKB, thereby facilitating NF-kappa-B signaling activation. Regulates TRAF6 and MAP3K7 ubiquitination. Involved in the regulation of cell mobility. Regulates lipolysaccharide (LPS)-induced endothelial cell migration. Is involved in the regulation of skin pigmentation through the control of melanocyte migration in the epidermis. In Mus musculus (Mouse), this protein is SAM and SH3 domain-containing protein 1 (Sash1).